Reading from the N-terminus, the 368-residue chain is 2-aminoethylphosphonate--pyruvate transaminase (368 aa).

Lysine 192 carries the N6-(pyridoxal phosphate)lysine modification.

Belongs to the class-V pyridoxal-phosphate-dependent aminotransferase family. PhnW subfamily. Homodimer. Requires pyridoxal 5'-phosphate as cofactor.

The catalysed reaction is (2-aminoethyl)phosphonate + pyruvate = phosphonoacetaldehyde + L-alanine. Functionally, involved in phosphonate degradation. In Pseudomonas putida (strain GB-1), this protein is 2-aminoethylphosphonate--pyruvate transaminase.